Reading from the N-terminus, the 961-residue chain is Probable inorganic carbon transporter subunit DabA (961 aa).

Positions 406, 408, 653, and 668 each coordinate Zn(2+).

The protein belongs to the inorganic carbon transporter (TC 9.A.2) DabA family. In terms of assembly, forms a complex with DabB. Zn(2+) is required as a cofactor.

Its subcellular location is the cell inner membrane. Part of an energy-coupled inorganic carbon pump. The chain is Probable inorganic carbon transporter subunit DabA from Hydrogenobaculum sp. (strain Y04AAS1).